Consider the following 209-residue polypeptide: Kynurenine formamidase (209 aa).

Residue tryptophan 19 participates in substrate binding. Residues histidine 49, histidine 53, and aspartate 55 each coordinate Zn(2+). Residue histidine 59 is the Proton donor/acceptor of the active site. Zn(2+) is bound by residues histidine 160 and glutamate 172.

This sequence belongs to the Cyclase 1 superfamily. KynB family. Homodimer. Zn(2+) serves as cofactor.

The catalysed reaction is N-formyl-L-kynurenine + H2O = L-kynurenine + formate + H(+). The protein operates within amino-acid degradation; L-tryptophan degradation via kynurenine pathway; L-kynurenine from L-tryptophan: step 2/2. In terms of biological role, catalyzes the hydrolysis of N-formyl-L-kynurenine to L-kynurenine, the second step in the kynurenine pathway of tryptophan degradation. In Ralstonia nicotianae (strain ATCC BAA-1114 / GMI1000) (Ralstonia solanacearum), this protein is Kynurenine formamidase.